Consider the following 445-residue polypeptide: Sodium/proton-dependent alanine carrier protein (445 aa).

9 consecutive transmembrane segments (helical) span residues Ile-41–Ala-61, Ala-103–Asp-123, Phe-129–Phe-149, Ala-159–Ala-179, Val-188–Gly-208, Ala-249–Phe-269, Thr-304–Thr-324, Ala-349–Ala-369, and Met-375–Phe-395.

The protein belongs to the alanine or glycine:cation symporter (AGCS) (TC 2.A.25) family. Post-translationally, the N-terminus is blocked.

It is found in the cell membrane. Functionally, mediates the active transport of alanine, driven by either an H(+) or Na(+) gradient. This is Sodium/proton-dependent alanine carrier protein from Bacillus sp. (strain PS3).